The chain runs to 192 residues: Probable GTP-binding protein EngB (192 aa).

One can recognise an EngB-type G domain in the interval 22-192; that stretch reads GRPEIVFVGR…LLASIDTFTQ (171 aa). Residues 30 to 37, 57 to 61, 75 to 78, 142 to 145, and 172 to 174 each bind GTP; these read GRSNVGKS, GKTRL, DLPG, TKWD, and YSS. 2 residues coordinate Mg(2+): Ser37 and Thr59.

Belongs to the TRAFAC class TrmE-Era-EngA-EngB-Septin-like GTPase superfamily. EngB GTPase family. It depends on Mg(2+) as a cofactor.

Functionally, necessary for normal cell division and for the maintenance of normal septation. This is Probable GTP-binding protein EngB from Chlorobaculum tepidum (strain ATCC 49652 / DSM 12025 / NBRC 103806 / TLS) (Chlorobium tepidum).